Consider the following 1377-residue polypeptide: Zinc finger MYM-type protein 2 (1377 aa).

Glycyl lysine isopeptide (Lys-Gly) (interchain with G-Cter in SUMO2) cross-links involve residues K48, K88, K98, and K104. 2 stretches are compositionally biased toward polar residues: residues 85–115 (TSSK…SVSE) and 127–138 (TNQGQEKNSSNF). The segment at 85-177 (TSSKNEELQG…GMGNSGITTE (93 aa)) is disordered. Positions 139–152 (IERRPPETKNRTND) are enriched in basic and acidic residues. A Glycyl lysine isopeptide (Lys-Gly) (interchain with G-Cter in SUMO2) cross-link involves residue K147. Residues 153–164 (VDFSTSSFSRSK) are compositionally biased toward polar residues. S159 carries the post-translational modification Phosphoserine. Residues K253 and K297 each participate in a glycyl lysine isopeptide (Lys-Gly) (interchain with G-Cter in SUMO2) cross-link. The segment at 273-305 (NGESATHHNPDSWISQSASFPRNQKQPGVDSLS) is disordered. Positions 284-298 (SWISQSASFPRNQKQ) are enriched in polar residues. S305 bears the Phosphoserine mark. Glycyl lysine isopeptide (Lys-Gly) (interchain with G-Cter in SUMO2) cross-links involve residues K312, K325, K348, and K366. The segment at 327-363 (VKVTCANCKKPLQKGQTAYQRKGSAHLFCSTTCLSSF) adopts an MYM-type 1 zinc-finger fold. The MYM-type 2 zinc finger occupies 369 to 409 (PKKLCVMCKKDITTMKGTIVAQVDSSESFQEFCSTSCLSLY). Glycyl lysine isopeptide (Lys-Gly) (interchain with G-Cter in SUMO2) cross-links involve residues K417, K441, K491, K503, K513, K529, and K532. 2 consecutive MYM-type zinc fingers follow at residues 421–456 (NKSR…FNRY) and 463–502 (IMNC…VSEY). An MYM-type 5 zinc finger spans residues 533-570 (LTTCTGCRTQCRFFDMTQCIGPNGYMEPYCSTACMNSH). Residues K576, K603, K649, K658, K688, K700, and K709 each participate in a glycyl lysine isopeptide (Lys-Gly) (interchain with G-Cter in SUMO2) cross-link. The MYM-type 6 zinc-finger motif lies at 636–671 (QLKCNYCKNSFCSKPEILEWENKVHQFCSKTCSDDY). 2 MYM-type zinc fingers span residues 723 to 758 (RCVT…CKKF) and 764 to 799 (KAAR…LLRF). Glycyl lysine isopeptide (Lys-Gly) (interchain with G-Cter in SUMO2) cross-links involve residues K764, K788, K812, and K829. Phosphoserine is present on residues S838 and S958. Disordered stretches follow at residues 983 to 1002 (LLKN…PYEP) and 1028 to 1064 (VFGE…SDNS). A compositionally biased stretch (basic residues) spans 1039 to 1050 (PRSKKKGAKRKA). S1064 bears the Phosphoserine mark. Position 1376 is a phosphothreonine (T1376).

May be a component of a BHC histone deacetylase complex that contains HDAC1, HDAC2, HMG20B/BRAF35, KDM1A, RCOR1/CoREST, PHF21A/BHC80, ZNF198, ZNF217, ZMYM3, GSE1 and GTF2I.

It localises to the nucleus. May function as a transcription factor. The sequence is that of Zinc finger MYM-type protein 2 (ZMYM2) from Pongo abelii (Sumatran orangutan).